A 346-amino-acid chain; its full sequence is Tetraacyldisaccharide 4'-kinase (346 aa).

54 to 61 (TVGGAGKT) provides a ligand contact to ATP.

This sequence belongs to the LpxK family.

The catalysed reaction is a lipid A disaccharide + ATP = a lipid IVA + ADP + H(+). It functions in the pathway glycolipid biosynthesis; lipid IV(A) biosynthesis; lipid IV(A) from (3R)-3-hydroxytetradecanoyl-[acyl-carrier-protein] and UDP-N-acetyl-alpha-D-glucosamine: step 6/6. Its function is as follows. Transfers the gamma-phosphate of ATP to the 4'-position of a tetraacyldisaccharide 1-phosphate intermediate (termed DS-1-P) to form tetraacyldisaccharide 1,4'-bis-phosphate (lipid IVA). In Rhizobium meliloti (strain 1021) (Ensifer meliloti), this protein is Tetraacyldisaccharide 4'-kinase.